The following is a 304-amino-acid chain: MNRAFSRKKDKTWMHTPEALSKHYIPYNAKFLGSTEVEQPKGTEVVRDAVRKLKFARHIKKSEGQKIPKVELQISIYGVKILEPKTKEVQHNCQLHRISFCADDKTDKRIFTFICKDSESNKHLCFVFDSEKCAEEITLTIGQAFDLAYRKFLESGGKDVETRKQIAGMQKRIQDLETENMELKNKVQDLESRLRTTQVSTSPAHGVTVMSPSTDIFDMIPFSPISHQSPTSARNGTQLPPIPSRSAETKRDLFGAEPFDPFNCGSGDFPPDIQSKLDEMQEGFKMGLTLEGTVFCLDPLDSRC.

Thr16 carries the phosphothreonine modification. Residues 21 to 176 (SKHYIPYNAK…AGMQKRIQDL (156 aa)) enclose the PID domain. Residues 159–200 (DVETRKQIAGMQKRIQDLETENMELKNKVQDLESRLRTTQVS) adopt a coiled-coil conformation. At Ser223 the chain carries Phosphoserine.

Belongs to the ced-6 family. As to quaternary structure, homodimer. Interacts with clathrin and MEGF10. Interacts with GDP-bound ARF6, but not with GTP-bound ARF6. Part of a complex composed of GULP1, ACAP1 and ARF6. Interacts with ACAP1, LRP1 and STAB2. In terms of tissue distribution, detected throughout the brain, particularly in Purkinje cells, hippocampal and cortical neurons (at protein level).

The protein resides in the cytoplasm. In terms of biological role, modulates cellular glycosphingolipid and cholesterol transport. May play a role in the internalization of various LRP1 ligands, such as PSAP. May function as an adapter protein. Required for efficient phagocytosis of apoptotic cells. Increases cellular levels of GTP-bound ARF6. In Mus musculus (Mouse), this protein is PTB domain-containing engulfment adapter protein 1 (Gulp1).